The primary structure comprises 255 residues: uncharacterized protein (255 aa).

2 disordered regions span residues 112–145 (CWPG…PSPG) and 157–183 (GLAE…PDAQ).

This is an uncharacterized protein from Rhodospirillum rubrum.